Reading from the N-terminus, the 410-residue chain is D-amino acid dehydrogenase (410 aa).

FAD is bound at residue 9 to 14; that stretch reads GGGIVG.

Belongs to the DadA oxidoreductase family. The cofactor is FAD.

It localises to the cell inner membrane. The catalysed reaction is a D-alpha-amino acid + a quinone + H2O = a 2-oxocarboxylate + a quinol + NH4(+). Its function is as follows. Catalyzes the oxidative deamination of D-amino acids. Has broad substrate specificity; is mostly active on D-proline, and to a lesser extent, on several other D-amino acids such as D-alanine, D-phenylalanine and D-serine. Mediates electron transport from D-proline to coenzyme Q1 in vitro, and is involved in the electron transport chain from D-proline to the c-type cytochrome in vivo. The chain is D-amino acid dehydrogenase from Helicobacter pylori (strain ATCC 700392 / 26695) (Campylobacter pylori).